The following is a 59-amino-acid chain: Large ribosomal subunit protein eL29 (59 aa).

Residues 1–26 are compositionally biased toward basic residues; that stretch reads MAKSKNHTAHNQTRKAHRNGIKKPKT. The segment at 1–37 is disordered; sequence MAKSKNHTAHNQTRKAHRNGIKKPKTYKYPSLKGVDP. Residue K52 forms a Glycyl lysine isopeptide (Lys-Gly) (interchain with G-Cter in ubiquitin) linkage.

Belongs to the eukaryotic ribosomal protein eL29 family. Component of the large ribosomal subunit (LSU). Mature yeast ribosomes consist of a small (40S) and a large (60S) subunit. The 40S small subunit contains 1 molecule of ribosomal RNA (18S rRNA) and 33 different proteins (encoded by 57 genes). The large 60S subunit contains 3 rRNA molecules (25S, 5.8S and 5S rRNA) and 46 different proteins (encoded by 81 genes).

Its subcellular location is the cytoplasm. Component of the ribosome, a large ribonucleoprotein complex responsible for the synthesis of proteins in the cell. The small ribosomal subunit (SSU) binds messenger RNAs (mRNAs) and translates the encoded message by selecting cognate aminoacyl-transfer RNA (tRNA) molecules. The large subunit (LSU) contains the ribosomal catalytic site termed the peptidyl transferase center (PTC), which catalyzes the formation of peptide bonds, thereby polymerizing the amino acids delivered by tRNAs into a polypeptide chain. The nascent polypeptides leave the ribosome through a tunnel in the LSU and interact with protein factors that function in enzymatic processing, targeting, and the membrane insertion of nascent chains at the exit of the ribosomal tunnel. This chain is Large ribosomal subunit protein eL29, found in Saccharomyces cerevisiae (strain ATCC 204508 / S288c) (Baker's yeast).